A 226-amino-acid chain; its full sequence is tRNA (guanine-N(1)-)-methyltransferase (226 aa).

S-adenosyl-L-methionine-binding positions include glycine 112 and 132–137; that span reads IGDYVL.

Belongs to the RNA methyltransferase TrmD family. As to quaternary structure, homodimer.

It is found in the cytoplasm. The enzyme catalyses guanosine(37) in tRNA + S-adenosyl-L-methionine = N(1)-methylguanosine(37) in tRNA + S-adenosyl-L-homocysteine + H(+). Specifically methylates guanosine-37 in various tRNAs. The polypeptide is tRNA (guanine-N(1)-)-methyltransferase (Christiangramia forsetii (strain DSM 17595 / CGMCC 1.15422 / KT0803) (Gramella forsetii)).